A 357-amino-acid chain; its full sequence is Sulfate/thiosulfate import ATP-binding protein CysA (357 aa).

Residues 3-237 form the ABC transporter domain; that stretch reads IQIQGVSKQY…PASPFVYDFL (235 aa). 35 to 42 is an ATP binding site; it reads GPSGSGKT.

The protein belongs to the ABC transporter superfamily. Sulfate/tungstate importer (TC 3.A.1.6) family. As to quaternary structure, the complex is composed of two ATP-binding proteins (CysA), two transmembrane proteins (CysT and CysW) and a solute-binding protein (CysP).

The protein resides in the cell membrane. It carries out the reaction sulfate(out) + ATP + H2O = sulfate(in) + ADP + phosphate + H(+). It catalyses the reaction thiosulfate(out) + ATP + H2O = thiosulfate(in) + ADP + phosphate + H(+). Part of the ABC transporter complex CysAWTP involved in sulfate/thiosulfate import. Responsible for energy coupling to the transport system. The sequence is that of Sulfate/thiosulfate import ATP-binding protein CysA from Bacillus cereus (strain ATCC 14579 / DSM 31 / CCUG 7414 / JCM 2152 / NBRC 15305 / NCIMB 9373 / NCTC 2599 / NRRL B-3711).